We begin with the raw amino-acid sequence, 494 residues long: Endoglucanase 22 (494 aa).

The first 21 residues, 1 to 21 (MKPLVCSFIVILLILLPTTIS), serve as a signal peptide directing secretion. D76 serves as the catalytic Nucleophile. The active site involves H413. A glycan (N-linked (GlcNAc...) asparagine) is linked at N468. E473 is an active-site residue.

The protein belongs to the glycosyl hydrolase 9 (cellulase E) family.

It localises to the secreted. It carries out the reaction Endohydrolysis of (1-&gt;4)-beta-D-glucosidic linkages in cellulose, lichenin and cereal beta-D-glucans.. The protein is Endoglucanase 22 (GH9B16) of Arabidopsis thaliana (Mouse-ear cress).